A 243-amino-acid polypeptide reads, in one-letter code: DNA repair protein RecO (243 aa).

This sequence belongs to the RecO family.

Its function is as follows. Involved in DNA repair and RecF pathway recombination. In Xylella fastidiosa (strain M23), this protein is DNA repair protein RecO.